A 391-amino-acid chain; its full sequence is Phosphoglycerate kinase (391 aa).

Residues 19-21, Arg35, 58-61, Arg117, and Arg150 contribute to the substrate site; these read DYN and HMGR. Residues Lys201, Glu323, and 349–352 each bind ATP; that span reads GGDT.

It belongs to the phosphoglycerate kinase family. Monomer.

It is found in the cytoplasm. The catalysed reaction is (2R)-3-phosphoglycerate + ATP = (2R)-3-phospho-glyceroyl phosphate + ADP. It participates in carbohydrate degradation; glycolysis; pyruvate from D-glyceraldehyde 3-phosphate: step 2/5. The chain is Phosphoglycerate kinase from Desulforapulum autotrophicum (strain ATCC 43914 / DSM 3382 / VKM B-1955 / HRM2) (Desulfobacterium autotrophicum).